A 328-amino-acid polypeptide reads, in one-letter code: MTSTKQHKKVILVGDGAVGSSYAFALVNQGIAQELGIIEIPQLHEKAVGDALDLSHALAFTSPKKIYAAQYSDCADADLVVITAGAPQKPGETRLDLVGKNLAINKSIVTQVVESGFKGIFLVAANPVDVLTYSTWKFSGFPKERVIGSGTSLDSARFRQALAEKLDVDARSVHAYIMGEHGDSEFAVWSHANIAGVNLEEFLKDTQNVQEAELIELFEGVRDAAYTIINKKGATYYGIAVALARITKAILDDENAVLPLSVFQEGQYGVENVFIGQPAVVGAHGIVRPVNIPLNDAETQKMQASAKELQAIIDEAWKNPEFQEASKN.

NAD(+) is bound by residues V18, E39, K46, Y71, and 85–86 (GA). The substrate site is built by Q88 and R94. Residues S107, 124 to 126 (AAN), and S149 contribute to the NAD(+) site. 126–129 (NPVD) lines the substrate pocket. 154-157 (DSAR) is a binding site for substrate. R159 and H174 together coordinate beta-D-fructose 1,6-bisphosphate. H181 (proton acceptor) is an active-site residue. Phosphotyrosine is present on Y226. T235 lines the substrate pocket.

The protein belongs to the LDH/MDH superfamily. LDH family. Homotetramer.

The protein resides in the cytoplasm. It carries out the reaction (S)-lactate + NAD(+) = pyruvate + NADH + H(+). Its pathway is fermentation; pyruvate fermentation to lactate; (S)-lactate from pyruvate: step 1/1. Its activity is regulated as follows. Allosterically activated by fructose 1,6-bisphosphate (FBP). Functionally, catalyzes the conversion of lactate to pyruvate. This chain is L-lactate dehydrogenase, found in Streptococcus pneumoniae (strain ATCC BAA-255 / R6).